The chain runs to 290 residues: MDIEAYFERIGYQSSRNKLDLEELTEILQHQIRAIPFENLNIHCGESMELNLEVIFDQVVRKKRGGWCLQVNHLLYWALTKMGFEATMLGGYVFNTPANKYSSGMIHLLVQVTLSGKDYIVDAGFGRSYQMWEPLELTSGKDQPQVPAIFRLTEENGTWYLDQIRREQYVPNQEFVNSDLLEKNKYRKIYSFTLEPRTIEDFESINTYLQTSPASLFTSKSFCSLQTLEGVHCLVGSTLTYRRFSYKDNIDLVEFKSLTEEEIEDVLKTIFGVSLERKLVPKHGDRFFTI.

The Acyl-thioester intermediate role is filled by Cys-68. CoA contacts are provided by Ser-103 and Gly-104. 106–107 (IH) is a substrate binding site. Residues His-107 and Asp-122 contribute to the active site. A CoA-binding site is contributed by Tyr-208.

It belongs to the arylamine N-acetyltransferase family.

Its subcellular location is the cytoplasm. The enzyme catalyses an arylamine + acetyl-CoA = an N-acetylarylamine + CoA. It carries out the reaction an N-hydroxyarylamine + acetyl-CoA = an N-acetoxyarylamine + CoA. Catalyzes the N- or O-acetylation of various arylamine and heterocyclic amine substrates. Participates in the detoxification of a plethora of hydrazine and arylamine drugs. In Rattus norvegicus (Rat), this protein is Arylamine N-acetyltransferase 2 (Nat2).